The primary structure comprises 620 residues: Two-component response regulator ORR27 (620 aa).

One can recognise a Response regulatory domain in the interval 24–138 (HVLVVDDDAA…AIKFIWKHVL (115 aa)). Asp76 bears the 4-aspartylphosphate mark. 2 disordered regions span residues 171 to 197 (PPAVQLPAAPAQAGNRDGEAHEEAELS) and 215 to 257 (VWSS…LEAT). A DNA-binding region (myb-like GARP) is located at residues 261-321 (KKVRTRFTWT…HLQKYRSWLE (61 aa)). Residues 431-456 (SVSRDAHENGNSQARGSAMSNGTSGT) are compositionally biased toward polar residues. Disordered stretches follow at residues 431–457 (SVSRDAHENGNSQARGSAMSNGTSGTR), 501–523 (SDQNPGTSHPTSSSAINNQNSKT), and 596–620 (PPRGLNNEIASHENTNGKNGASSGP). Positions 603-620 (EIASHENTNGKNGASSGP) are enriched in polar residues.

The protein belongs to the ARR family. Type-B subfamily. Post-translationally, two-component system major event consists of a His-to-Asp phosphorelay between a sensor histidine kinase (HK) and a response regulator (RR). In plants, the His-to-Asp phosphorelay involves an additional intermediate named Histidine-containing phosphotransfer protein (HPt). This multistep phosphorelay consists of a His-Asp-His-Asp sequential transfer of a phosphate group between first a His and an Asp of the HK protein, followed by the transfer to a conserved His of the HPt protein and finally the transfer to an Asp in the receiver domain of the RR protein.

It localises to the nucleus. Functionally, transcriptional activator that binds specific DNA sequence. Functions as a response regulator involved in His-to-Asp phosphorelay signal transduction system. Phosphorylation of the Asp residue in the receiver domain activates the ability of the protein to promote the transcription of target genes. May directly activate some type-A response regulators in response to cytokinins. The protein is Two-component response regulator ORR27 of Oryza sativa subsp. japonica (Rice).